A 124-amino-acid chain; its full sequence is Ribonuclease pancreatic A (124 aa).

A disordered region spans residues 1–24; sequence AESSAMKFERQHVDSGGSSSSNAN. Positions 7 and 10 each coordinate substrate. His12 acts as the Proton acceptor in catalysis. 4 disulfide bridges follow: Cys26–Cys84, Cys40–Cys95, Cys58–Cys110, and Cys65–Cys72. Substrate contacts are provided by residues 41 to 45, Lys66, and Arg85; that span reads KPVNT. His119 functions as the Proton donor in the catalytic mechanism.

The protein belongs to the pancreatic ribonuclease family. In terms of tissue distribution, pancreas.

Its subcellular location is the secreted. The catalysed reaction is an [RNA] containing cytidine + H2O = an [RNA]-3'-cytidine-3'-phosphate + a 5'-hydroxy-ribonucleotide-3'-[RNA].. It catalyses the reaction an [RNA] containing uridine + H2O = an [RNA]-3'-uridine-3'-phosphate + a 5'-hydroxy-ribonucleotide-3'-[RNA].. The polypeptide is Ribonuclease pancreatic A (Cavia porcellus (Guinea pig)).